The chain runs to 267 residues: Probable 6-oxopurine nucleoside phosphorylase (267 aa).

Residues S10, 50–51, and 83–84 each bind phosphate; these read RH and SA. Position 188 (M188) interacts with substrate. T189 is a phosphate binding site. A substrate-binding site is contributed by 212–214; it reads NYA.

Belongs to the PNP/MTAP phosphorylase family. MTAP subfamily. In terms of assembly, homohexamer. Dimer of a homotrimer.

The catalysed reaction is a purine D-ribonucleoside + phosphate = a purine nucleobase + alpha-D-ribose 1-phosphate. The enzyme catalyses guanosine + phosphate = alpha-D-ribose 1-phosphate + guanine. It carries out the reaction inosine + phosphate = alpha-D-ribose 1-phosphate + hypoxanthine. It functions in the pathway purine metabolism; purine nucleoside salvage. Its function is as follows. Purine nucleoside phosphorylase which is highly specific for 6-oxopurine nucleosides. Cleaves guanosine or inosine to respective bases and sugar-1-phosphate molecules. Involved in purine salvage. This Thermococcus kodakarensis (strain ATCC BAA-918 / JCM 12380 / KOD1) (Pyrococcus kodakaraensis (strain KOD1)) protein is Probable 6-oxopurine nucleoside phosphorylase.